The following is a 520-amino-acid chain: 5'-nucleotidase domain-containing protein 2 (520 aa).

Asp-73 serves as the catalytic Nucleophile. Residues Asp-73, Asp-75, and Asp-358 each contribute to the Mg(2+) site. Asp-75 (proton donor) is an active-site residue.

Belongs to the 5'(3')-deoxyribonucleotidase family. Interacts with tyrosine 3-monooxygenase TH; the interaction results in reduced phosphorylation and decreased catalytic activity of TH.

The protein localises to the cytoplasm. Its function is as follows. Promotes dephosphorylation of tyrosine 3-monooxygenase TH which decreases TH catalytic activity and leads to reduced synthesis of catecholamines including dopamine, noradrenaline and adrenaline. The exact mechanism of activity is unknown but may act as a phosphatase or promote the activity of phosphatases or may inhibit phosphorylation by acting as a barrier to interfere with protein kinase access. In Homo sapiens (Human), this protein is 5'-nucleotidase domain-containing protein 2 (NT5DC2).